The primary structure comprises 233 residues: Choline-phosphate cytidylyltransferase (233 aa).

Positions 6, 8, 9, 80, 85, and 101 each coordinate CDP-choline. Mg(2+) is bound at residue D102. Y187 is a binding site for CDP-choline. The Mg(2+) site is built by E213 and D215.

Belongs to the LicC/PntC cytidylyltransferase family. The cofactor is Mg(2+).

It carries out the reaction phosphocholine + CTP + H(+) = CDP-choline + diphosphate. It functions in the pathway lipopolysaccharide biosynthesis. Functionally, cytidylyltransferase involved in the biosynthesis of lipopolysaccharides (LPS), a necessary component and antigenic determinant of the outer membrane that has been shown to be an important factor in the host-parasite interaction in a number of Gram-negative species. Catalyzes the activation of phosphocholine (P-Cho) to CDP-choline (CDP-Cho). LicC is critical for the expression of the 6A2-specific epitope. This Haemophilus influenzae (strain ATCC 51907 / DSM 11121 / KW20 / Rd) protein is Choline-phosphate cytidylyltransferase.